The following is a 718-amino-acid chain: MLFSLRRLKKLANLEAFSDQKVIDSLINLGFEVDQITKLNEISGIKFGQILEIRKNPEADNLWICKVQFADKIREIQTAAKNVIENKQVLAFIPGSKSGNTTFLAKKLRGHISEGMLISAVELGFNKHLLNSELDQGVLVFDPIFDLESNPLKVLELDDLILDIKLLWNRPDGNSYLVLANELAAFFKTDFSLINKEISGKFYSELKIINKTDSKIFALEIQKLPKLALVDIFLLLKSEVKIGNLAQNFSNFILIYTGQPSYCLQLEKHQQKVELIEQKVKIKYEPDTISSYHFLNQEKKPLLIPEFSDQIIMENNSFFLIMPKFNLLKVKQIKQFLKKNSLKLTQLGKNYNYGTTFIALSFLNFFLEDQKIDFSWPINFDKSLISKKTFLDLNYNELKEILGLELSQEDISKTNLILEKIGYNFDNTSFSPPFYRVDIEFFADYAADFLRFYGLEKLKDCKLEQVKSKIPNPDLEPVKLKTLGYYETNSFLLISKEEDFNPLELKSQDLLTFPSQEHTKIRYSLAWQLAKITKYNQKRKITEINLYEKGSIAGWNHSLALASTIYTSEDLKKHLKILYNYDFDFLPADSEFLNPEKSQFIYLDNVLVGWLGQVAEKYNYENVNFLEILLSKVEKIPKKEGGKIKFRPYDNSQLKYRDITLSLPMKDIPDPYLKVIQKIPEIFSVKLINYVIINNQQKITYRITGPDQVCAEIDKFYK.

Positions Leu39–Lys153 constitute a tRNA-binding domain. The region spanning Ser386–Asp460 is the B5 domain. Asp438, Asp444, and Asp448 together coordinate Mg(2+).

This sequence belongs to the phenylalanyl-tRNA synthetase beta subunit family. Type 1 subfamily. As to quaternary structure, tetramer of two alpha and two beta subunits. Mg(2+) serves as cofactor.

The protein localises to the cytoplasm. The enzyme catalyses tRNA(Phe) + L-phenylalanine + ATP = L-phenylalanyl-tRNA(Phe) + AMP + diphosphate + H(+). This is Phenylalanine--tRNA ligase beta subunit from Mesomycoplasma hyopneumoniae (strain 232) (Mycoplasma hyopneumoniae).